Consider the following 297-residue polypeptide: Glycine--tRNA ligase alpha subunit (297 aa).

Belongs to the class-II aminoacyl-tRNA synthetase family. In terms of assembly, tetramer of two alpha and two beta subunits.

It localises to the cytoplasm. It catalyses the reaction tRNA(Gly) + glycine + ATP = glycyl-tRNA(Gly) + AMP + diphosphate. The polypeptide is Glycine--tRNA ligase alpha subunit (glyQ) (Halalkalibacterium halodurans (strain ATCC BAA-125 / DSM 18197 / FERM 7344 / JCM 9153 / C-125) (Bacillus halodurans)).